The sequence spans 399 residues: Formate-dependent phosphoribosylglycinamide formyltransferase (399 aa).

N(1)-(5-phospho-beta-D-ribosyl)glycinamide contacts are provided by residues 22–23 and E82; that span reads EL. ATP contacts are provided by residues R115, K157, 162–167, 197–200, and E205; these read SSGKGQ and EAVV. The ATP-grasp domain maps to 120–315; sequence RLAAEELGLQ…EFELHARAIL (196 aa). Mg(2+)-binding residues include E274 and E286. N(1)-(5-phospho-beta-D-ribosyl)glycinamide contacts are provided by residues D293, K362, and 369-370; that span reads RR.

The protein belongs to the PurK/PurT family. As to quaternary structure, homodimer.

It catalyses the reaction N(1)-(5-phospho-beta-D-ribosyl)glycinamide + formate + ATP = N(2)-formyl-N(1)-(5-phospho-beta-D-ribosyl)glycinamide + ADP + phosphate + H(+). It participates in purine metabolism; IMP biosynthesis via de novo pathway; N(2)-formyl-N(1)-(5-phospho-D-ribosyl)glycinamide from N(1)-(5-phospho-D-ribosyl)glycinamide (formate route): step 1/1. In terms of biological role, involved in the de novo purine biosynthesis. Catalyzes the transfer of formate to 5-phospho-ribosyl-glycinamide (GAR), producing 5-phospho-ribosyl-N-formylglycinamide (FGAR). Formate is provided by PurU via hydrolysis of 10-formyl-tetrahydrofolate. This Thioalkalivibrio sulfidiphilus (strain HL-EbGR7) protein is Formate-dependent phosphoribosylglycinamide formyltransferase.